Consider the following 368-residue polypeptide: Agmatine deiminase (368 aa).

The active-site Amidino-cysteine intermediate is Cys357.

It belongs to the agmatine deiminase family. In terms of assembly, homodimer.

It carries out the reaction agmatine + H2O = N-carbamoylputrescine + NH4(+). It participates in amine and polyamine biosynthesis; putrescine biosynthesis via agmatine pathway; N-carbamoylputrescine from agmatine: step 1/1. Mediates the hydrolysis of agmatine into N-carbamoylputrescine in the arginine decarboxylase (ADC) pathway of putrescine biosynthesis, a basic polyamine. This chain is Agmatine deiminase, found in Pseudomonas aeruginosa (strain UCBPP-PA14).